The primary structure comprises 137 residues: ATP synthase epsilon chain (137 aa).

The protein belongs to the ATPase epsilon chain family. F-type ATPases have 2 components, CF(1) - the catalytic core - and CF(0) - the membrane proton channel. CF(1) has five subunits: alpha(3), beta(3), gamma(1), delta(1), epsilon(1). CF(0) has three main subunits: a, b and c.

The protein resides in the cellular thylakoid membrane. Its function is as follows. Produces ATP from ADP in the presence of a proton gradient across the membrane. The protein is ATP synthase epsilon chain (atpC) of Nostoc sp. (strain PCC 7120 / SAG 25.82 / UTEX 2576).